The following is a 144-amino-acid chain: Snake venom vascular endothelial growth factor toxin cratrin (144 aa).

The N-terminal stretch at 1 to 24 (MAVYLLAVAILFCIQGWPSGTVQG) is a signal peptide. Position 25 is a pyrrolidone carboxylic acid (Q25). Cystine bridges form between C38–C80, C69–C115, and C73–C117. The tract at residues 119–144 (PRSTVNNGKRKKNPKEGEPRAKFPLV) is disordered. Over residues 132-144 (PKEGEPRAKFPLV) the composition is skewed to basic and acidic residues.

It belongs to the PDGF/VEGF growth factor family. Snake venom VEGF subfamily. As to quaternary structure, homodimer; disulfide-linked. Interacts with VEGF receptor-1 (FLT1) with a high affinity, whereas it binds to VEGF receptor-2 (KDR) with a low affinity. Does not bind VEGF receptor-3 (FLT4). In terms of tissue distribution, expressed by the venom gland.

Its subcellular location is the secreted. Snake venom VEGFs that may contribute to venom dispersion and prey subjugation by inducing vascular permeability and hypotension. This protein induces an increase in capillary permeability after intradermal injection, as well as a drastic hypotensive effect after intravenous injection. The hypotension is mediated by nitric oxide (NO), which is produced by VEGF-activated endothelium NO synthase. Also induces angiogenesis in vitro. Like other crotalid VEGFs, this protein interacts with VEGF receptor-1 (FLT1) with a high affinity, whereas it binds to VEGF receptor-2 (KDR) with a low affinity. This Crotalus atrox (Western diamondback rattlesnake) protein is Snake venom vascular endothelial growth factor toxin cratrin.